The sequence spans 27 residues: C-reactive protein P1 (27 aa).

The disordered stretch occupies residues 1-27; that stretch reads IPQDLSGKMLTFPKEEDDDDVKLMTPK. The 22-residue stretch at 6–27 folds into the Pentraxin (PTX) domain; that stretch reads SGKMLTFPKEEDDDDVKLMTPK.

Belongs to the pentraxin family. As to quaternary structure, homopentamer. Pentraxin (or pentaxin) have a discoid arrangement of 5 non-covalently bound subunits. Exists as a dimer under reducing conditions. Requires Ca(2+) as cofactor. In terms of processing, glycosylated.

It is found in the secreted. Its function is as follows. Displays several functions associated with host defense: it promotes agglutination, bacterial capsular swelling, phagocytosis, and complement fixation through its calcium-dependent binding to phosphorylcholine. This is C-reactive protein P1 from Gadus morhua (Atlantic cod).